A 73-amino-acid polypeptide reads, in one-letter code: MSKLGVLLTICLLLLPLTALPMDEDQPADQPADRMQDDISSEQYPLFDKRQKCCGKGMTCPRYFRDNFICGCC.

The signal sequence occupies residues methionine 1–alanine 19. A propeptide spanning residues leucine 20–aspartate 48 is cleaved from the precursor. Glutamine 51 is modified (pyrrolidone carboxylic acid). Disulfide bonds link cysteine 53-cysteine 72, cysteine 54-cysteine 70, and cysteine 60-cysteine 73.

Belongs to the conotoxin M superfamily. As to expression, expressed by the venom duct.

The protein localises to the secreted. Functionally, shows a paralytic effect in fish. This Conus consors (Singed cone) protein is Conotoxin CnIIIG.